The sequence spans 396 residues: Acetyl-CoA acetyltransferase (396 aa).

The active-site Acyl-thioester intermediate is the Cys89. Residues 223–225 (RKS) and Ser249 contribute to the CoA site. Residues His352 and Cys382 each act as proton acceptor in the active site.

It belongs to the thiolase-like superfamily. Thiolase family.

It localises to the cytoplasm. It carries out the reaction 2 acetyl-CoA = acetoacetyl-CoA + CoA. The protein operates within lipid metabolism; butanoate metabolism. Its function is as follows. Involved in syntrophic growth of S.wolfei with butyrate, as part of the butyrate oxidation pathway. Probably catalyzes the beta-keto thiolysis of acetoacetyl-CoA, leading to 2 acetyl-CoA molecules. The sequence is that of Acetyl-CoA acetyltransferase from Syntrophomonas wolfei subsp. wolfei (strain DSM 2245B / Goettingen).